A 159-amino-acid polypeptide reads, in one-letter code: 2-C-methyl-D-erythritol 2,4-cyclodiphosphate synthase (159 aa).

Residues aspartate 10 and histidine 12 each contribute to the a divalent metal cation site. Residues 10–12 and 37–38 each bind 4-CDP-2-C-methyl-D-erythritol 2-phosphate; these read DVH and HS. A divalent metal cation is bound at residue histidine 45. 4-CDP-2-C-methyl-D-erythritol 2-phosphate-binding positions include 59 to 61, 64 to 68, 103 to 109, 135 to 138, phenylalanine 142, and arginine 145; these read DIG, FLDTD, AQAPKML, and TTTE.

The protein belongs to the IspF family. Homotrimer. A divalent metal cation is required as a cofactor.

It catalyses the reaction 4-CDP-2-C-methyl-D-erythritol 2-phosphate = 2-C-methyl-D-erythritol 2,4-cyclic diphosphate + CMP. It functions in the pathway isoprenoid biosynthesis; isopentenyl diphosphate biosynthesis via DXP pathway; isopentenyl diphosphate from 1-deoxy-D-xylulose 5-phosphate: step 4/6. Its function is as follows. Involved in the biosynthesis of isopentenyl diphosphate (IPP) and dimethylallyl diphosphate (DMAPP), two major building blocks of isoprenoid compounds. Catalyzes the conversion of 4-diphosphocytidyl-2-C-methyl-D-erythritol 2-phosphate (CDP-ME2P) to 2-C-methyl-D-erythritol 2,4-cyclodiphosphate (ME-CPP) with a corresponding release of cytidine 5-monophosphate (CMP). This is 2-C-methyl-D-erythritol 2,4-cyclodiphosphate synthase from Francisella tularensis subsp. tularensis (strain FSC 198).